Reading from the N-terminus, the 329-residue chain is Malate dehydrogenase (329 aa).

Residue 12–18 (GAAGQIG) coordinates NAD(+). Substrate contacts are provided by arginine 93 and arginine 99. NAD(+) contacts are provided by residues asparagine 106, glutamine 113, and 130-132 (TGN). Substrate is bound by residues asparagine 132 and arginine 163. The active-site Proton acceptor is histidine 188.

Belongs to the LDH/MDH superfamily. MDH type 2 family.

The catalysed reaction is (S)-malate + NAD(+) = oxaloacetate + NADH + H(+). In terms of biological role, catalyzes the reversible oxidation of malate to oxaloacetate. The polypeptide is Malate dehydrogenase (Mycobacterium avium (strain 104)).